The primary structure comprises 294 residues: NAD kinase (294 aa).

Asp73 (proton acceptor) is an active-site residue. NAD(+) is bound by residues 73-74 (DG), 147-148 (NE), His158, Arg175, Asp177, 188-193 (TAYSLS), and Gln249.

The protein belongs to the NAD kinase family. A divalent metal cation serves as cofactor.

It is found in the cytoplasm. The enzyme catalyses NAD(+) + ATP = ADP + NADP(+) + H(+). Its function is as follows. Involved in the regulation of the intracellular balance of NAD and NADP, and is a key enzyme in the biosynthesis of NADP. Catalyzes specifically the phosphorylation on 2'-hydroxyl of the adenosine moiety of NAD to yield NADP. This Aeromonas salmonicida (strain A449) protein is NAD kinase.